Reading from the N-terminus, the 159-residue chain is Na(+)/H(+) antiporter subunit E1 (159 aa).

The next 4 membrane-spanning stretches (helical) occupy residues 1 to 21 (MAIQIILNFILAFIWIFLSGS), 27 to 47 (LLLGFILGLGFVYLFSRILPG), 49 to 69 (FYFIKIYKILKLAVVFFVELL), and 101 to 121 (WQIVLLSNLITLTPGTVVLGI).

Belongs to the CPA3 antiporters (TC 2.A.63) subunit E family. As to quaternary structure, may form a heterooligomeric complex that consists of seven subunits: mnhA1, mnhB1, mnhC1, mnhD1, mnhE1, mnhF1 and mnhG1.

Its subcellular location is the cell membrane. Mnh complex is a Na(+)/H(+) antiporter involved in Na(+) excretion. The polypeptide is Na(+)/H(+) antiporter subunit E1 (mnhE1) (Staphylococcus haemolyticus (strain JCSC1435)).